Here is a 567-residue protein sequence, read N- to C-terminus: Proline--tRNA ligase (567 aa).

The protein belongs to the class-II aminoacyl-tRNA synthetase family. ProS type 1 subfamily. As to quaternary structure, homodimer.

Its subcellular location is the cytoplasm. The enzyme catalyses tRNA(Pro) + L-proline + ATP = L-prolyl-tRNA(Pro) + AMP + diphosphate. Its function is as follows. Catalyzes the attachment of proline to tRNA(Pro) in a two-step reaction: proline is first activated by ATP to form Pro-AMP and then transferred to the acceptor end of tRNA(Pro). As ProRS can inadvertently accommodate and process non-cognate amino acids such as alanine and cysteine, to avoid such errors it has two additional distinct editing activities against alanine. One activity is designated as 'pretransfer' editing and involves the tRNA(Pro)-independent hydrolysis of activated Ala-AMP. The other activity is designated 'posttransfer' editing and involves deacylation of mischarged Ala-tRNA(Pro). The misacylated Cys-tRNA(Pro) is not edited by ProRS. In Staphylococcus aureus (strain bovine RF122 / ET3-1), this protein is Proline--tRNA ligase.